A 462-amino-acid chain; its full sequence is L-seryl-tRNA(Sec) selenium transferase (462 aa).

At Lys-294 the chain carries N6-(pyridoxal phosphate)lysine.

This sequence belongs to the SelA family. As to quaternary structure, homodecamer; pentamer of dimers. Binds only one seryl-tRNA(Sec) per dimer. It depends on pyridoxal 5'-phosphate as a cofactor.

It localises to the cytoplasm. It carries out the reaction L-seryl-tRNA(Sec) + selenophosphate + H(+) = L-selenocysteinyl-tRNA(Sec) + phosphate. It participates in aminoacyl-tRNA biosynthesis; selenocysteinyl-tRNA(Sec) biosynthesis; selenocysteinyl-tRNA(Sec) from L-seryl-tRNA(Sec) (bacterial route): step 1/1. In terms of biological role, converts seryl-tRNA(Sec) to selenocysteinyl-tRNA(Sec) required for selenoprotein biosynthesis. The sequence is that of L-seryl-tRNA(Sec) selenium transferase from Yersinia pestis bv. Antiqua (strain Antiqua).